The following is a 151-amino-acid chain: Deoxyuridine 5'-triphosphate nucleotidohydrolase (151 aa).

Substrate is bound by residues 70–72 (RSG), Asn-83, and 87–89 (TID).

It belongs to the dUTPase family. The cofactor is Mg(2+).

It catalyses the reaction dUTP + H2O = dUMP + diphosphate + H(+). Its pathway is pyrimidine metabolism; dUMP biosynthesis; dUMP from dCTP (dUTP route): step 2/2. This enzyme is involved in nucleotide metabolism: it produces dUMP, the immediate precursor of thymidine nucleotides and it decreases the intracellular concentration of dUTP so that uracil cannot be incorporated into DNA. This Ruegeria pomeroyi (strain ATCC 700808 / DSM 15171 / DSS-3) (Silicibacter pomeroyi) protein is Deoxyuridine 5'-triphosphate nucleotidohydrolase.